Reading from the N-terminus, the 224-residue chain is Deoxyribose-phosphate aldolase (224 aa).

The active-site Proton donor/acceptor is the aspartate 92. The active-site Schiff-base intermediate with acetaldehyde is lysine 155. Catalysis depends on lysine 184, which acts as the Proton donor/acceptor.

The protein belongs to the DeoC/FbaB aldolase family. DeoC type 1 subfamily.

The protein localises to the cytoplasm. It catalyses the reaction 2-deoxy-D-ribose 5-phosphate = D-glyceraldehyde 3-phosphate + acetaldehyde. It participates in carbohydrate degradation; 2-deoxy-D-ribose 1-phosphate degradation; D-glyceraldehyde 3-phosphate and acetaldehyde from 2-deoxy-alpha-D-ribose 1-phosphate: step 2/2. In terms of biological role, catalyzes a reversible aldol reaction between acetaldehyde and D-glyceraldehyde 3-phosphate to generate 2-deoxy-D-ribose 5-phosphate. This chain is Deoxyribose-phosphate aldolase, found in Clostridium perfringens (strain SM101 / Type A).